The following is a 148-amino-acid chain: FAD synthase (148 aa).

ATP contacts are provided by residues 14–15, 19–22, and Asp-100; these read VF and HVGH.

Belongs to the archaeal FAD synthase family. Homodimer. Requires a divalent metal cation as cofactor.

It catalyses the reaction FMN + ATP + H(+) = FAD + diphosphate. It functions in the pathway cofactor biosynthesis; FAD biosynthesis; FAD from FMN: step 1/1. Catalyzes the transfer of the AMP portion of ATP to flavin mononucleotide (FMN) to produce flavin adenine dinucleotide (FAD) coenzyme. The polypeptide is FAD synthase (Thermococcus sibiricus (strain DSM 12597 / MM 739)).